Consider the following 246-residue polypeptide: Uridylate kinase (246 aa).

16–19 (KLGG) is a binding site for ATP. Gly57 contributes to the UMP binding site. Residues Gly58 and Arg62 each coordinate ATP. UMP contacts are provided by residues Asp77 and 138 to 145 (MGMPYFST). 2 residues coordinate ATP: Tyr171 and Asp174.

The protein belongs to the UMP kinase family. In terms of assembly, homohexamer.

The protein resides in the cytoplasm. The enzyme catalyses UMP + ATP = UDP + ADP. It functions in the pathway pyrimidine metabolism; CTP biosynthesis via de novo pathway; UDP from UMP (UMPK route): step 1/1. With respect to regulation, inhibited by UTP. Functionally, catalyzes the reversible phosphorylation of UMP to UDP. In Corynebacterium jeikeium (strain K411), this protein is Uridylate kinase.